We begin with the raw amino-acid sequence, 218 residues long: Envelope glycoprotein L (218 aa).

The tract at residues 57–185 (KLVKATRLDF…LGPPPLGCFT (129 aa)) is interaction with gH. Residues 60–218 (KATRLDFTWG…ASYYANLQKT (159 aa)) form the gL alphaherpesvirus-type domain. Disulfide bonds link C81/C113 and C183/C206.

The protein belongs to the herpesviridae glycoprotein L (gL) family. Alphaherpesvirinae gL subfamily. Interacts with glycoprotein H (gH); this interaction is necessary for the correct processing and cell surface expression of gH. The heterodimer gH/gL seems to interact with gB trimers during fusion.

The protein localises to the virion membrane. It is found in the host cell membrane. Its subcellular location is the host Golgi apparatus. The protein resides in the host trans-Golgi network. The heterodimer glycoprotein H-glycoprotein L is required for the fusion of viral and plasma membranes leading to virus entry into the host cell. Acts as a functional inhibitor of gH and maintains gH in an inhibited form. Upon binding to host integrins, gL dissociates from gH leading to activation of the viral fusion glycoproteins gB and gH. This Equus caballus (Horse) protein is Envelope glycoprotein L.